The sequence spans 62 residues: Large ribosomal subunit protein bL28 (62 aa).

Belongs to the bacterial ribosomal protein bL28 family.

The polypeptide is Large ribosomal subunit protein bL28 (Clostridioides difficile (strain 630) (Peptoclostridium difficile)).